Reading from the N-terminus, the 629-residue chain is tRNA uridine 5-carboxymethylaminomethyl modification enzyme MnmG (629 aa).

13–18 contributes to the FAD binding site; that stretch reads GGGHAG. Position 273–287 (273–287) interacts with NAD(+); that stretch reads GPRYCPSIEDKIVRF.

Belongs to the MnmG family. Homodimer. Heterotetramer of two MnmE and two MnmG subunits. It depends on FAD as a cofactor.

Its subcellular location is the cytoplasm. Functionally, NAD-binding protein involved in the addition of a carboxymethylaminomethyl (cmnm) group at the wobble position (U34) of certain tRNAs, forming tRNA-cmnm(5)s(2)U34. This Marinomonas sp. (strain MWYL1) protein is tRNA uridine 5-carboxymethylaminomethyl modification enzyme MnmG.